The sequence spans 272 residues: AA9 family lytic polysaccharide monooxygenase G (272 aa).

An N-terminal signal peptide occupies residues 1-22 (MKGAGSASFLLTLLSTITRTSA). H23 is a binding site for Cu(2+). The N-linked (GlcNAc...) asparagine glycan is linked to N60. 2 cysteine pairs are disulfide-bonded: C78-C202 and C121-C125. H110 provides a ligand contact to Cu(2+). O2 contacts are provided by H188 and Q197. Y199 is a binding site for Cu(2+).

Belongs to the polysaccharide monooxygenase AA9 family. It depends on Cu(2+) as a cofactor.

Its subcellular location is the secreted. The catalysed reaction is [(1-&gt;4)-beta-D-glucosyl]n+m + reduced acceptor + O2 = 4-dehydro-beta-D-glucosyl-[(1-&gt;4)-beta-D-glucosyl]n-1 + [(1-&gt;4)-beta-D-glucosyl]m + acceptor + H2O.. In terms of biological role, lytic polysaccharide monooxygenase (LPMO) that depolymerizes crystalline and amorphous polysaccharides via the oxidation of scissile alpha- or beta-(1-4)-glycosidic bonds, yielding C1 or C4 oxidation products. Catalysis by LPMOs requires the reduction of the active-site copper from Cu(II) to Cu(I) by a reducing agent and H(2)O(2) or O(2) as a cosubstrate. Acts preferentially on crystalline regions of cellulose such as highly crystalline algae cellulose. This Emericella nidulans (strain FGSC A4 / ATCC 38163 / CBS 112.46 / NRRL 194 / M139) (Aspergillus nidulans) protein is AA9 family lytic polysaccharide monooxygenase G.